The following is a 54-amino-acid chain: UPF0391 membrane protein Reut_A0124 (54 aa).

2 helical membrane passes run 5–25 (ALVF…GIAA) and 30–50 (IAKI…VMGL).

The protein belongs to the UPF0391 family.

The protein resides in the cell membrane. This is UPF0391 membrane protein Reut_A0124 from Cupriavidus pinatubonensis (strain JMP 134 / LMG 1197) (Cupriavidus necator (strain JMP 134)).